We begin with the raw amino-acid sequence, 72 residues long: Translation initiation factor IF-1 (72 aa).

The 72-residue stretch at 1–72 (MAKEEVLEFP…TKGRITYRLK (72 aa)) folds into the S1-like domain.

The protein belongs to the IF-1 family. As to quaternary structure, component of the 30S ribosomal translation pre-initiation complex which assembles on the 30S ribosome in the order IF-2 and IF-3, IF-1 and N-formylmethionyl-tRNA(fMet); mRNA recruitment can occur at any time during PIC assembly.

The protein resides in the cytoplasm. Functionally, one of the essential components for the initiation of protein synthesis. Stabilizes the binding of IF-2 and IF-3 on the 30S subunit to which N-formylmethionyl-tRNA(fMet) subsequently binds. Helps modulate mRNA selection, yielding the 30S pre-initiation complex (PIC). Upon addition of the 50S ribosomal subunit IF-1, IF-2 and IF-3 are released leaving the mature 70S translation initiation complex. The chain is Translation initiation factor IF-1 from Brucella suis biovar 1 (strain 1330).